The following is an 887-amino-acid chain: Pyruvate, phosphate dikinase 2 (887 aa).

Threonine 467 carries the post-translational modification Phosphothreonine; by PDRP1. Histidine 469 (tele-phosphohistidine intermediate) is an active-site residue. Positions 575, 632, 761, 782, 783, 784, and 785 each coordinate substrate. A Mg(2+)-binding site is contributed by glutamate 761. Mg(2+) is bound at residue aspartate 785. Cysteine 847 serves as the catalytic Proton donor.

Belongs to the PEP-utilizing enzyme family. Mg(2+) is required as a cofactor.

The protein resides in the cytoplasm. It carries out the reaction pyruvate + phosphate + ATP = phosphoenolpyruvate + AMP + diphosphate + H(+). Its function is as follows. Formation of phosphoenolpyruvate. The protein is Pyruvate, phosphate dikinase 2 (PPDK2) of Oryza sativa subsp. japonica (Rice).